The primary structure comprises 201 residues: Small ribosomal subunit protein uS4 (201 aa).

The 65-residue stretch at arginine 103–threonine 167 folds into the S4 RNA-binding domain. The tract at residues valine 163 to serine 201 is disordered. Acidic residues predominate over residues proline 172–valine 185. The span at alanine 189–serine 201 shows a compositional bias: basic and acidic residues.

This sequence belongs to the universal ribosomal protein uS4 family. In terms of assembly, part of the 30S ribosomal subunit. Contacts protein S5. The interaction surface between S4 and S5 is involved in control of translational fidelity.

Its function is as follows. One of the primary rRNA binding proteins, it binds directly to 16S rRNA where it nucleates assembly of the body of the 30S subunit. Functionally, with S5 and S12 plays an important role in translational accuracy. This is Small ribosomal subunit protein uS4 from Nitrosopumilus maritimus (strain SCM1).